The primary structure comprises 144 residues: Large ribosomal subunit protein uL16 (144 aa).

It belongs to the universal ribosomal protein uL16 family. As to quaternary structure, part of the 50S ribosomal subunit.

In terms of biological role, binds 23S rRNA and is also seen to make contacts with the A and possibly P site tRNAs. The polypeptide is Large ribosomal subunit protein uL16 (Latilactobacillus sakei subsp. sakei (strain 23K) (Lactobacillus sakei subsp. sakei)).